We begin with the raw amino-acid sequence, 216 residues long: GTP cyclohydrolase-2 (216 aa).

50–54 (RIHSE) lines the GTP pocket. Positions 55, 66, and 68 each coordinate Zn(2+). GTP is bound by residues Q71, 93–95 (EGR), and T115. The active-site Proton acceptor is the D127. R129 functions as the Nucleophile in the catalytic mechanism. The GTP site is built by T150 and K155.

Belongs to the GTP cyclohydrolase II family. Zn(2+) serves as cofactor.

The catalysed reaction is GTP + 4 H2O = 2,5-diamino-6-hydroxy-4-(5-phosphoribosylamino)-pyrimidine + formate + 2 phosphate + 3 H(+). It functions in the pathway cofactor biosynthesis; riboflavin biosynthesis; 5-amino-6-(D-ribitylamino)uracil from GTP: step 1/4. In terms of biological role, catalyzes the conversion of GTP to 2,5-diamino-6-ribosylamino-4(3H)-pyrimidinone 5'-phosphate (DARP), formate and pyrophosphate. The protein is GTP cyclohydrolase-2 of Histophilus somni (strain 129Pt) (Haemophilus somnus).